Reading from the N-terminus, the 373-residue chain is Spermidine/putrescine import ATP-binding protein PotA (373 aa).

An ABC transporter domain is found at 5-235; sequence IVFEHVSKKF…PKSSFVADFI (231 aa). Residue 37–44 coordinates ATP; that stretch reads GPSGCGKT.

Belongs to the ABC transporter superfamily. Spermidine/putrescine importer (TC 3.A.1.11.1) family. In terms of assembly, the complex is composed of two ATP-binding proteins (PotA), two transmembrane proteins (PotB and PotC) and a solute-binding protein (PotD).

Its subcellular location is the cell inner membrane. The enzyme catalyses ATP + H2O + polyamine-[polyamine-binding protein]Side 1 = ADP + phosphate + polyamineSide 2 + [polyamine-binding protein]Side 1.. In terms of biological role, part of the ABC transporter complex PotABCD involved in spermidine/putrescine import. Responsible for energy coupling to the transport system. This Protochlamydia amoebophila (strain UWE25) protein is Spermidine/putrescine import ATP-binding protein PotA.